Consider the following 1158-residue polypeptide: MISLILQFMLKLHILGTILSHHLFFPLCFVFSAYVPEDELKAAKIDEEHLQDDGLSLDGQDAEYLCNEEDDGREQLSYQNSPLSNGTNPDAGYGSPLSDTSDHLADFKSTSSKEGQDKEEVEDMDTDAKLSLQDSLAQMKAVYANLISDASWSSITKDIMKSKQVSASSINSTSSSHKGNNSVANSHASTIASSGASSSSNASASTKTNVTQSSNSTKATTLTNANNGTINGANSGGVAYDWHQAALAKTLQHTPYHLMPEPSLFSTVQLYRQNNKLYGPVFTGASKFRCKDCSAAYDTLVGLTVHMNETGHYRDDNKDKEEDRGKKWSKPRKRSLMEMEGKEDAQKVLKCMYCGHSFESLQDLSVHMIKTKHYQKVPLKEPMPALASKLVPSTKKRVFQDLMSPCSPDSISSTPGIPLAETAPTKDPKISNPYVTANNRYGYQNGASYTWQFEARKAQILKCMECGSSHDTLQQLTAHMMVTGHFLKVTNSASKKGKQLVFDPVVEEKIQSIPLPPTTTRLPAPAIKSQPDSPIHPSIMDDRKELEEEKFEEPEEKKIKQEKEDPSERVEKSEKLSHYKYLREEDLEESPKGGLDILKSLENTVSSAISKAQTGTPTWGGYPSIHAAYQLQGSVKSSIPAIQSVQIQPTFNASSLKSLTSDSSTLIHSPSSPSPPPNHKSNVLAMEELVEKVTGKIPSKKDRDEKLTERNSKHLTAELPSPVLKERKDLPKPDDLTKPTKNGTVDKDLEHTPVREGEYKESHADNPIKNGTDALKTQVSNGCGNLGIITDHSPEQPLVNPLSALQSIMNTHLGKASKTVSPLLDPLAMLYKISNNMMEKPMYNPAQVKQVEPINRYYENDDDQPMDLTKSKSGIGPTNNCTSTIISNSSITNSTRPILSTLAEQVSSPLRENALMDISDMVKNLTGRLTPKSSTPSSISEKSDADGCAFEDGLEDLSPIQKRKGRQSNWNPQHLLILQAQFASSLRETPDGKYIITDLGPQERVHICKFTGLSMTTISHWLANVKYQLRRTGGTKFLKNIDSGHPLFLCSDCASQFRTPSTYINHLESHLGFSLKDLSKLSIDLIRDQQAVTKMITDKTFRALDLNEEDSNSIFQCKLCNRTFVSKHAVKLHLSKTHGKSPEDHLIFVTELEKLEKA.

Disordered regions lie at residues 70 to 126 (DDGR…DMDT), 170 to 228 (INST…ANNG), and 310 to 341 (TGHY…EMEG). The span at 76–88 (LSYQNSPLSNGTN) shows a compositional bias: polar residues. Composition is skewed to low complexity over residues 186–205 (SHAS…ASAS) and 213–228 (SSNS…ANNG). C2H2-type zinc fingers lie at residues 288–312 (FRCK…ETGH) and 349–373 (LKCM…KTKH). The span at 310–326 (TGHYRDDNKDKEEDRGK) shows a compositional bias: basic and acidic residues. Residues 405–425 (PCSPDSISSTPGIPLAETAPT) form a disordered region. A C2H2-type 3 zinc finger spans residues 461-485 (LKCMECGSSHDTLQQLTAHMMVTGH). Disordered stretches follow at residues 516–573 (PPTT…VEKS), 656–681 (LKSL…NHKS), and 693–748 (VTGK…VDKD). Residues 555-573 (EEKKIKQEKEDPSERVEKS) show a composition bias toward basic and acidic residues. A compositionally biased stretch (low complexity) spans 656-671 (LKSLTSDSSTLIHSPS). Basic and acidic residues-rich tracts occupy residues 693 to 716 (VTGK…KHLT) and 724 to 748 (LKER…VDKD). Residues 963–1033 (RKGRQSNWNP…NVKYQLRRTG (71 aa)) constitute a DNA-binding region (homeobox). 2 C2H2-type zinc fingers span residues 1048-1070 (FLCS…LESH) and 1115-1138 (FQCK…SKTH).

This sequence belongs to the teashirt C2H2-type zinc-finger protein family.

The protein resides in the nucleus. In terms of biological role, probable transcriptional regulator involved in developmental processes. May act as a transcriptional repressor (Potential). In Danio rerio (Zebrafish), this protein is Teashirt homolog 1 (tshz1).